Here is a 509-residue protein sequence, read N- to C-terminus: MDASKKKKTFNFPSAFTILFAILILAVGLTWVIPSGSYSKLTYNSTDNVFVVKAYGVDDKTYPATTDTLDNLNIKIKLSNFTEGVIKKPIAIPGTYQRVEQHHKGIEDITKSMVEGTIEAVDVMVFIFVLGGMIGVINRTGSFNAGLMALVKKTKGNEFFIVFCVSVLMVLGGTTCGIEEEAVAFYPILVPVFLALGYDAIVCVGAIFLAASMGTAFSTINPFSVVIASNAAGIQFTEGIGFRALGLVLGATCVIAYLYWYCKKIKADPSFSYTYDDREEFRQRYMKNFDPNTTIPFSARRKLILTLFCISFPIMIWGVMVGGWWFPQMAASFLAITIIIMFISGLSEKDIMESFTEGASELVGVSLIIGLARGVNLVLEQGMISDTILDYMSNVVSGMPGSVFILGQLVVFIFLGLIVPSSSGLAVLSMPIMAPLADSVGIPRDIVVSAYNWGQYAMLFLAPTGLVLVTLQMLQIPFDRWVKFVMPMIGCLLLIGSILLVVQVSLYSV.

The next 13 membrane-spanning stretches (helical) occupy residues 14 to 34 (SAFTILFAILILAVGLTWVIP), 117 to 137 (TIEAVDVMVFIFVLGGMIGVI), 158 to 178 (EFFIVFCVSVLMVLGGTTCGI), 188 to 208 (ILVPVFLALGYDAIVCVGAIF), 209 to 229 (LAASMGTAFSTINPFSVVIAS), 240 to 260 (IGFRALGLVLGATCVIAYLYW), 303 to 323 (LILTLFCISFPIMIWGVMVGG), 324 to 344 (WWFPQMAASFLAITIIIMFIS), 359 to 379 (ASELVGVSLIIGLARGVNLVL), 399 to 419 (MPGSVFILGQLVVFIFLGLIV), 423 to 443 (SGLAVLSMPIMAPLADSVGIP), 458 to 478 (MLFLAPTGLVLVTLQMLQIPF), and 484 to 504 (FVMPMIGCLLLIGSILLVVQV).

The protein to E.coli YfcC. This sequence to B.subtilis YcgA.

The protein resides in the cell membrane. This is an uncharacterized protein from Haemophilus influenzae (strain ATCC 51907 / DSM 11121 / KW20 / Rd).